The following is an 88-amino-acid chain: Small ribosomal subunit protein uS15 (88 aa).

This sequence belongs to the universal ribosomal protein uS15 family. In terms of assembly, part of the 30S ribosomal subunit. Forms a bridge to the 50S subunit in the 70S ribosome, contacting the 23S rRNA.

One of the primary rRNA binding proteins, it binds directly to 16S rRNA where it helps nucleate assembly of the platform of the 30S subunit by binding and bridging several RNA helices of the 16S rRNA. Functionally, forms an intersubunit bridge (bridge B4) with the 23S rRNA of the 50S subunit in the ribosome. The chain is Small ribosomal subunit protein uS15 from Syntrophus aciditrophicus (strain SB).